Consider the following 135-residue polypeptide: M-zodatoxin-Lt8q (135 aa).

The signal sequence occupies residues M1–S20. The propeptide occupies K21–R60.

Belongs to the cationic peptide 06 (cytoinsectotoxin) family. As to expression, expressed by the venom gland.

Its subcellular location is the secreted. Functionally, insecticidal, cytolytic and antimicrobial peptide. Forms voltage-dependent, ion-permeable channels in membranes. At high concentration causes cell membrane lysis. This is M-zodatoxin-Lt8q (cit 1-16) from Lachesana tarabaevi (Spider).